We begin with the raw amino-acid sequence, 467 residues long: 3-isopropylmalate dehydratase large subunit (467 aa).

Positions 349, 409, and 412 each coordinate [4Fe-4S] cluster.

It belongs to the aconitase/IPM isomerase family. LeuC type 1 subfamily. As to quaternary structure, heterodimer of LeuC and LeuD. The cofactor is [4Fe-4S] cluster.

The catalysed reaction is (2R,3S)-3-isopropylmalate = (2S)-2-isopropylmalate. It functions in the pathway amino-acid biosynthesis; L-leucine biosynthesis; L-leucine from 3-methyl-2-oxobutanoate: step 2/4. Catalyzes the isomerization between 2-isopropylmalate and 3-isopropylmalate, via the formation of 2-isopropylmaleate. In Ruegeria sp. (strain TM1040) (Silicibacter sp.), this protein is 3-isopropylmalate dehydratase large subunit.